A 514-amino-acid polypeptide reads, in one-letter code: Putative fucosyltransferase 10 (514 aa).

5 N-linked (GlcNAc...) asparagine glycosylation sites follow: N185, N210, N355, N377, and N456.

The protein belongs to the glycosyltransferase 37 family. As to expression, expressed in root, leaves, stems and seedlings.

Its subcellular location is the golgi apparatus. It functions in the pathway protein modification; protein glycosylation. May be involved in cell wall biosynthesis. May act as a fucosyltransferase. This is Putative fucosyltransferase 10 (FUT10) from Arabidopsis thaliana (Mouse-ear cress).